The chain runs to 324 residues: MQVSLMANFIELKEATTNPDYGCPPAERDIEAHISMGVVNLDKPSGPTSHQVDSWVRDMLHVEKVGHGGTLDPKVTGVLPLGIDRATRVMQLLLEAPKEYVCLMRVHREVDEERIREVLGEFQGKIFQIPPLKSAVKRDLRVRTIYRVDILEVDGQDVLFRIACEAGTYVRKYCHDVGEALGAGAHMAELRRTAVGPFTEEGLVTLHDLKDAYQFWVEDGDETFLRECILPMEFAVGHLPRVVILDSAVDAICHGADLARGGIAGLDDNIAWGDTVAIMTLKGELVGVGEASMSALDIAAADGGLVIETRKVFMEPGTYPRMWR.

The active-site Nucleophile is the aspartate 72. The region spanning 239-314 is the PUA domain; it reads LPRVVILDSA…LVIETRKVFM (76 aa).

The protein belongs to the pseudouridine synthase TruB family. Type 2 subfamily.

The enzyme catalyses uridine(55) in tRNA = pseudouridine(55) in tRNA. Could be responsible for synthesis of pseudouridine from uracil-55 in the psi GC loop of transfer RNAs. The protein is Probable tRNA pseudouridine synthase B of Methanothermobacter thermautotrophicus (strain ATCC 29096 / DSM 1053 / JCM 10044 / NBRC 100330 / Delta H) (Methanobacterium thermoautotrophicum).